The chain runs to 387 residues: Peroxisomal membrane protein LPX1 (387 aa).

Residues 385-387 are peroxisomal targeting signal type 1; that stretch reads QKL.

Its subcellular location is the peroxisome matrix. Has acyl esterase, lipase and phospholipase A activity. The polypeptide is Peroxisomal membrane protein LPX1 (LPX1) (Saccharomyces cerevisiae (strain ATCC 204508 / S288c) (Baker's yeast)).